The sequence spans 422 residues: 5'-deoxyadenosine deaminase (422 aa).

Residues H57 and H59 each contribute to the Zn(2+) site. Substrate is bound by residues E86 and H178. H205 lines the Zn(2+) pocket. Residues E208 and D294 each contribute to the substrate site. D294 serves as a coordination point for Zn(2+).

It belongs to the metallo-dependent hydrolases superfamily. MTA/SAH deaminase family. In terms of assembly, homotetramer. The cofactor is Zn(2+).

It catalyses the reaction 5'-deoxyadenosine + H2O + H(+) = 5'-deoxyinosine + NH4(+). It carries out the reaction S-adenosyl-L-homocysteine + H2O + H(+) = S-inosyl-L-homocysteine + NH4(+). The enzyme catalyses S-methyl-5'-thioadenosine + H2O + H(+) = S-methyl-5'-thioinosine + NH4(+). The catalysed reaction is adenosine + H2O + H(+) = inosine + NH4(+). It functions in the pathway amino-acid biosynthesis; S-adenosyl-L-methionine biosynthesis. Catalyzes the deamination of three SAM-derived enzymatic products, namely 5'-deoxyadenosine, S-adenosyl-L-homocysteine, and 5'-methylthioadenosine, to produce the inosine analogs. Can also deaminate adenosine. The preferred substrate for this enzyme is 5'-deoxyadenosine, but all these substrates are efficiently deaminated. Likely functions in a S-adenosyl-L-methionine (SAM) recycling pathway from S-adenosyl-L-homocysteine (SAH) produced from SAM-dependent methylation reactions. May also be involved in the recycling of 5'-deoxyadenosine, whereupon the 5'-deoxyribose moiety of 5'-deoxyinosine is further metabolized to deoxyhexoses used for the biosynthesis of aromatic amino acids in methanogens. In Methanococcus vannielii (strain ATCC 35089 / DSM 1224 / JCM 13029 / OCM 148 / SB), this protein is 5'-deoxyadenosine deaminase.